Here is a 488-residue protein sequence, read N- to C-terminus: 3-octaprenyl-4-hydroxybenzoate carboxy-lyase (488 aa).

N172 serves as a coordination point for Mn(2+). Prenylated FMN-binding positions include 175 to 177 (IYR), 189 to 191 (RWL), and 194 to 195 (RG). E238 contributes to the Mn(2+) binding site. D287 acts as the Proton donor in catalysis.

The protein belongs to the UbiD family. In terms of assembly, homohexamer. It depends on prenylated FMN as a cofactor. The cofactor is Mn(2+).

It localises to the cell membrane. The enzyme catalyses a 4-hydroxy-3-(all-trans-polyprenyl)benzoate + H(+) = a 2-(all-trans-polyprenyl)phenol + CO2. It participates in cofactor biosynthesis; ubiquinone biosynthesis. Functionally, catalyzes the decarboxylation of 3-octaprenyl-4-hydroxy benzoate to 2-octaprenylphenol, an intermediate step in ubiquinone biosynthesis. The chain is 3-octaprenyl-4-hydroxybenzoate carboxy-lyase from Azotobacter vinelandii (strain DJ / ATCC BAA-1303).